The chain runs to 211 residues: Transcription factor E (211 aa).

The HTH TFE/IIEalpha-type domain occupies 10-130; sequence GNPAIYQYLL…LWLMRMDHMN (121 aa).

It belongs to the TFE family. Monomer. Interaction with RNA polymerase subunits RpoF and RpoE is necessary for Tfe stimulatory transcription activity. Able to interact with Tbp and RNA polymerase in the absence of DNA promoter. Interacts both with the preinitiation and elongation complexes.

Transcription factor that plays a role in the activation of archaeal genes transcribed by RNA polymerase. Facilitates transcription initiation by enhancing TATA-box recognition by TATA-box-binding protein (Tbp), and transcription factor B (Tfb) and RNA polymerase recruitment. Not absolutely required for transcription in vitro, but particularly important in cases where Tbp or Tfb function is not optimal. It dynamically alters the nucleic acid-binding properties of RNA polymerases by stabilizing the initiation complex and destabilizing elongation complexes. Seems to translocate with the RNA polymerase following initiation and acts by binding to the non template strand of the transcription bubble in elongation complexes. The protein is Transcription factor E of Methanocorpusculum labreanum (strain ATCC 43576 / DSM 4855 / Z).